The primary structure comprises 67 residues: Large ribosomal subunit protein bL35 (67 aa).

Residues 1-16 (MPKMKTKSGAKKRFRV) are compositionally biased toward basic residues. The disordered stretch occupies residues 1–24 (MPKMKTKSGAKKRFRVRPGGTVKR).

It belongs to the bacterial ribosomal protein bL35 family.

This is Large ribosomal subunit protein bL35 from Polaromonas naphthalenivorans (strain CJ2).